Here is a 421-residue protein sequence, read N- to C-terminus: Bestrophin homolog 2 (421 aa).

Helical transmembrane passes span 28–48, 73–93, 239–259, and 275–295; these read IWKAIYMETIIFLICYGIISV, LSFIPLEFVLGFFVTIVVDRW, LMYPQLVCLAVNLYFLVSIIA, and VYFPVMTFLQFIFYMGWLKVI.

The protein belongs to the anion channel-forming bestrophin (TC 1.A.46) family. Calcium-sensitive chloride channel subfamily. In terms of assembly, forms oligomers.

It is found in the cell membrane. Forms chloride channels. In Caenorhabditis elegans, this protein is Bestrophin homolog 2 (best-2).